The following is a 142-amino-acid chain: Large ribosomal subunit protein uL11 (142 aa).

The protein belongs to the universal ribosomal protein uL11 family. Part of the ribosomal stalk of the 50S ribosomal subunit. Interacts with L10 and the large rRNA to form the base of the stalk. L10 forms an elongated spine to which L12 dimers bind in a sequential fashion forming a multimeric L10(L12)X complex. One or more lysine residues are methylated.

Its function is as follows. Forms part of the ribosomal stalk which helps the ribosome interact with GTP-bound translation factors. This Lachnoclostridium phytofermentans (strain ATCC 700394 / DSM 18823 / ISDg) (Clostridium phytofermentans) protein is Large ribosomal subunit protein uL11.